Consider the following 545-residue polypeptide: G-protein coupled receptor 161 (545 aa).

The Extracellular segment spans residues 1 to 46 (MDFVQHALLTASRGALTMSLNSSLSYRKELSNLTATEGGEGGAVSE). N-linked (GlcNAc...) asparagine glycosylation is found at asparagine 21 and asparagine 32. The helical transmembrane segment at 47–67 (FIAIIIITVLVCLGNLVIVVT) threads the bilayer. Topologically, residues 68 to 80 (LYKKSYLLTLSNK) are cytoplasmic. The helical transmembrane segment at 81–101 (FVFSLTLSNFLLSVLVLPFVV) threads the bilayer. Residues 102–117 (TSSIRREWIFGVVWCN) are Extracellular-facing. The cysteines at positions 116 and 194 are disulfide-linked. Asparagine 117 carries N-linked (GlcNAc...) asparagine glycosylation. The chain crosses the membrane as a helical span at residues 118–139 (FSALLYLLISSASMLTLGVIAI). At 140–159 (DRYYAVLYPMVYPMKITGNR) the chain is on the cytoplasmic side. A helical membrane pass occupies residues 160–180 (AVMALVYIWLHSLIGCLPPLF). Residues 181-205 (GWSSVEFDEFKWMCVAAWHQEPGYT) are Extracellular-facing. A helical transmembrane segment spans residues 206–226 (IFWQIWCALFPFLIMLVCYGF). The Cytoplasmic segment spans residues 227-285 (IFRVARVKARKVHCGTVVTVEEDSQRSGRKNSSTSTSSSGSRRNALQGVVYSANQCKAL). The helical transmembrane segment at 286–306 (ITILVVIGAFMVTWGPYMVVI) threads the bilayer. Topologically, residues 307–322 (TSEALWGKNCVSPTLE) are extracellular. Residues 323–343 (TWATWLSFTSAICHPLIYGLW) traverse the membrane as a helical segment. Residues 344-545 (NKTVRKELLG…EGNVLAAEQR (202 aa)) lie on the Cytoplasmic side of the membrane.

Belongs to the G-protein coupled receptor 1 family.

Its subcellular location is the cell projection. The protein localises to the cilium membrane. The protein resides in the cell membrane. Key negative regulator of Shh signaling, which promotes the processing of GLI3 into GLI3R during neural tube development. Recruited by TULP3 and the IFT-A complex to primary cilia and acts as a regulator of the PKA-dependent basal repression machinery in Shh signaling by increasing cAMP levels, leading to promote the PKA-dependent processing of GLI3 into GLI3R and repress the Shh signaling. In presence of SHH, it is removed from primary cilia and is internalized into recycling endosomes, preventing its activity and allowing activation of the Shh signaling. Its ligand is unknown. This Mus musculus (Mouse) protein is G-protein coupled receptor 161 (Gpr161).